Consider the following 616-residue polypeptide: TAF6-like RNA polymerase II p300/CBP-associated factor-associated factor 65 kDa subunit 6L (616 aa).

Disordered regions lie at residues 399-432 (SLLLQESPPGGSSETGFGSGLPPPSGVAGPEDPS) and 455-539 (FGTG…GTRD). Phosphoserine is present on residues S494 and S500. Asymmetric dimethylarginine is present on residues R549, R555, and R587.

It belongs to the TAF6 family. The PCAF complex is composed of a number of TBP-associated factors (TAFS), such as TAF5, TAF5L, TAF6, TAF6L, TAF9, TAF10 and TAF12, PCAF, and also PCAF-associated factors (PAFs), such as TADA2L/ADA2, TADA3L/ADA3 and SPT3. Component of the STAGA transcription coactivator-HAT complex, at least composed of SUPT3H, GCN5L2, TAF5L, TAF6L, SUPT7L, TADA3L, TAD1L, TAF10, TAF12, TRRAP and TAF9.

The protein resides in the nucleus. Functionally, functions as a component of the PCAF complex. The PCAF complex is capable of efficiently acetylating histones in a nucleosomal context. The PCAF complex could be considered as the human version of the yeast SAGA complex. With TAF5L, acts as an epigenetic regulator essential for somatic reprogramming. Regulates target genes through H3K9ac deposition and MYC recruitment which trigger MYC regulatory network to orchestrate gene expression programs to control embryonic stem cell state. Functions with MYC to activate target gene expression through RNA polymerase II pause release. The protein is TAF6-like RNA polymerase II p300/CBP-associated factor-associated factor 65 kDa subunit 6L of Mus musculus (Mouse).